A 200-amino-acid polypeptide reads, in one-letter code: 2-phospho-L-lactate guanylyltransferase (200 aa).

The protein belongs to the CofC family. In terms of assembly, homodimer.

The catalysed reaction is (2S)-2-phospholactate + GTP + H(+) = (2S)-lactyl-2-diphospho-5'-guanosine + diphosphate. Its pathway is cofactor biosynthesis; coenzyme F420 biosynthesis. In terms of biological role, guanylyltransferase that catalyzes the activation of (2S)-2-phospholactate (2-PL) as (2S)-lactyl-2-diphospho-5'-guanosine, via the condensation of 2-PL with GTP. It is involved in the biosynthesis of coenzyme F420, a hydride carrier cofactor. In Ferroglobus placidus (strain DSM 10642 / AEDII12DO), this protein is 2-phospho-L-lactate guanylyltransferase.